The primary structure comprises 392 residues: MKEKTGYYGEFGGRFVPETLMAALYELDSAYHRLKDDPGFKAELNSYLTEFAGRETPLTFCRNMSEYCGCKVYLKREDLVHGGAHKLNNTLGQALLAKAMGKKRLIAETGAGQHGVATAIAGAALNLPVEVFMGEEDCERQKLNVFRMELMGAKVHPVSSGTKTLKDATNEALREWAKTVDYTHYLIGSVVGPHPFPMIVRDFQSVIGEETRRQCLEKEGRLPDTLVACVGGGSNAIGMFYPMLNDDVRMVGVEAGGRALTPGNNGATLNTGSPGILHGALSYLIQNDDGQVGVTHSISAGLDYPGVGPEHSMLKDLNRVEYSYVMDDEVLEAFSYLSRTEGIIPALESAHAVSYVLKNRDSFDRDDIVVICLSGRGDKDVSSVSKMFGGEE.

Lys86 is subject to N6-(pyridoxal phosphate)lysine.

It belongs to the TrpB family. As to quaternary structure, tetramer of two alpha and two beta chains. The cofactor is pyridoxal 5'-phosphate.

It carries out the reaction (1S,2R)-1-C-(indol-3-yl)glycerol 3-phosphate + L-serine = D-glyceraldehyde 3-phosphate + L-tryptophan + H2O. The protein operates within amino-acid biosynthesis; L-tryptophan biosynthesis; L-tryptophan from chorismate: step 5/5. In terms of biological role, the beta subunit is responsible for the synthesis of L-tryptophan from indole and L-serine. The polypeptide is Tryptophan synthase beta chain (Methanocorpusculum labreanum (strain ATCC 43576 / DSM 4855 / Z)).